Consider the following 677-residue polypeptide: AP-2 complex subunit beta (677 aa).

Residues 597–677 form a disordered region; sequence RLRTRDSNPS…PMTPETHLMD (81 aa). The segment covering 616-627 has biased composition (basic residues); the sequence is KKYNHFHQKSQT. Positions 636 to 654 are enriched in polar residues; the sequence is RNSWNPSPFSDESNSNTFS.

This sequence belongs to the adaptor complexes large subunit family. As to quaternary structure, adaptor protein complex 2 (AP-2) is a heterotetramer composed of two large adaptins (alpha-type subunit apl3 and beta-type subunit apl1), a medium chain (mu-type subunit apm4) and a small adaptin (sigma-type subunit aps2).

It localises to the cell membrane. It is found in the membrane. The protein resides in the coated pit. Its function is as follows. Adaptins are components of the adaptor complexes which link clathrin to receptors in coated vesicles. Clathrin-associated protein complexes are believed to interact with the cytoplasmic tails of membrane proteins, leading to their selection and concentration. Beta adaptin is a subunit of the plasma membrane adaptor. The chain is AP-2 complex subunit beta (apl1) from Schizosaccharomyces pombe (strain 972 / ATCC 24843) (Fission yeast).